The chain runs to 748 residues: Cysteine--tRNA ligase, cytoplasmic (748 aa).

Residues 1-25 (MAAAPAEQGKGKRVQPPWSPPEGTK) form a disordered region. Cys-55 contributes to the Zn(2+) binding site. Gly-56 lines the L-cysteine pocket. The 'HIGH' region signature appears at 57-67 (PTVYDASHMGH). Thr-96 contributes to the L-cysteine binding site. The short motif at 101 to 104 (KIIK) is the 'KIIK' region element. 3 residues coordinate Zn(2+): Cys-348, His-373, and Glu-377. Residue His-373 coordinates L-cysteine. A 'KMSKS' region motif is present at residues 406–410 (KMSKS). Lys-409 serves as a coordination point for ATP. Basic and acidic residues-rich tracts occupy residues 656–679 (KIEE…EAAK) and 686–717 (PPHE…KELS). The interval 656-719 (KIEEEKKRKK…DTEGKELSKG (64 aa)) is disordered.

It belongs to the class-I aminoacyl-tRNA synthetase family. In terms of assembly, homodimer. It depends on Zn(2+) as a cofactor.

The protein localises to the cytoplasm. The enzyme catalyses tRNA(Cys) + L-cysteine + ATP = L-cysteinyl-tRNA(Cys) + AMP + diphosphate. Catalyzes the ATP-dependent ligation of cysteine to tRNA(Cys). In Gallus gallus (Chicken), this protein is Cysteine--tRNA ligase, cytoplasmic (CARS1).